The sequence spans 112 residues: MESRATAKFMRVSPRKTRLVARNIDGLPVEDAMNLLRFTPNKPAGVLYDVLRSALANAQQMPGVDVDAMVVKQVVVNEGPSWKRFLPRAQGRATRIKKRTSHITVILAEGQE.

This sequence belongs to the universal ribosomal protein uL22 family. In terms of assembly, part of the 50S ribosomal subunit.

Functionally, this protein binds specifically to 23S rRNA; its binding is stimulated by other ribosomal proteins, e.g. L4, L17, and L20. It is important during the early stages of 50S assembly. It makes multiple contacts with different domains of the 23S rRNA in the assembled 50S subunit and ribosome. In terms of biological role, the globular domain of the protein is located near the polypeptide exit tunnel on the outside of the subunit, while an extended beta-hairpin is found that lines the wall of the exit tunnel in the center of the 70S ribosome. The polypeptide is Large ribosomal subunit protein uL22 (Nitratidesulfovibrio vulgaris (strain ATCC 29579 / DSM 644 / CCUG 34227 / NCIMB 8303 / VKM B-1760 / Hildenborough) (Desulfovibrio vulgaris)).